We begin with the raw amino-acid sequence, 1081 residues long: Dyslexia-associated protein KIAA0319 homolog (1081 aa).

The first 22 residues, 1–22, serve as a signal peptide directing secretion; sequence MVSPPGVLSSLLLLAAMAGGSS. Positions 23–99 constitute an MANSC domain; sequence QQCSEGRTYS…PRTTGPIRSY (77 aa). Topologically, residues 23–964 are extracellular; that stretch reads QQCSEGRTYS…WDGESNCEWS (942 aa). Disordered regions lie at residues 141 to 160, 168 to 216, and 228 to 298; these read LPFL…SDDY, LQPS…DLTP, and NEST…TTVE. 3 stretches are compositionally biased toward polar residues: residues 197–209, 228–253, and 283–298; these read ASAT…ASTE, NEST…TASP, and HNPS…TTVE. PKD domains are found at residues 345–436, 444–533, 539–629, 630–723, and 729–820; these read AVSA…VMPA, VAIV…IRGS, VANA…VQAE, NNQA…VKKE, and RAQA…VLPD. N-linked (GlcNAc...) asparagine glycosylation is found at N430 and N522. Residues 965–985 form a helical membrane-spanning segment; the sequence is VFYVAALALTLTVLTGAVTWV. The Cytoplasmic portion of the chain corresponds to 986–1081; it reads CICCCRRRKR…VSFGYYSKDR (96 aa). An Endocytosis signal motif is present at residues 1004–1007; that stretch reads YTIL.

Homodimer. Interacts with AP2M1; required for clathrin-mediated endocytosis. N-glycosylated. Post-translationally, O-glycosylated. In terms of processing, shedding of the extracellular domain and intramembrane cleavage produce several proteolytic products. The intramembrane cleavage releases a soluble cytoplasmic polypeptide that translocates to the nucleolus. Highly expressed during development in ventricular zone, intermediate zone, cortical plate, striatum, hippocampus, and brain stem.

The protein resides in the cell membrane. Its subcellular location is the early endosome membrane. In terms of biological role, involved in neuronal migration during development of the cerebral neocortex. May function in a cell autonomous and a non-cell autonomous manner and play a role in appropriate adhesion between migrating neurons and radial glial fibers. May also regulate growth and differentiation of dendrites. The sequence is that of Dyslexia-associated protein KIAA0319 homolog from Rattus norvegicus (Rat).